A 517-amino-acid polypeptide reads, in one-letter code: GMP synthase [glutamine-hydrolyzing] (517 aa).

Residues Arg-9–Leu-199 form the Glutamine amidotransferase type-1 domain. The active-site Nucleophile is the Cys-86. Active-site residues include His-173 and Glu-175. The GMPS ATP-PPase domain occupies Trp-200–Arg-392. Residue Ser-227 to Ser-233 participates in ATP binding.

Homodimer.

It catalyses the reaction XMP + L-glutamine + ATP + H2O = GMP + L-glutamate + AMP + diphosphate + 2 H(+). It functions in the pathway purine metabolism; GMP biosynthesis; GMP from XMP (L-Gln route): step 1/1. In terms of biological role, catalyzes the synthesis of GMP from XMP. This chain is GMP synthase [glutamine-hydrolyzing], found in Vibrio vulnificus (strain CMCP6).